The following is a 181-amino-acid chain: Crossover junction endodeoxyribonuclease RuvC (181 aa).

Residues Asp-7, Glu-67, and Asp-139 contribute to the active site. The Mg(2+) site is built by Asp-7, Glu-67, and Asp-139.

Belongs to the RuvC family. As to quaternary structure, homodimer which binds Holliday junction (HJ) DNA. The HJ becomes 2-fold symmetrical on binding to RuvC with unstacked arms; it has a different conformation from HJ DNA in complex with RuvA. In the full resolvosome a probable DNA-RuvA(4)-RuvB(12)-RuvC(2) complex forms which resolves the HJ. Mg(2+) serves as cofactor.

The protein localises to the cytoplasm. It catalyses the reaction Endonucleolytic cleavage at a junction such as a reciprocal single-stranded crossover between two homologous DNA duplexes (Holliday junction).. Its function is as follows. The RuvA-RuvB-RuvC complex processes Holliday junction (HJ) DNA during genetic recombination and DNA repair. Endonuclease that resolves HJ intermediates. Cleaves cruciform DNA by making single-stranded nicks across the HJ at symmetrical positions within the homologous arms, yielding a 5'-phosphate and a 3'-hydroxyl group; requires a central core of homology in the junction. The consensus cleavage sequence is 5'-(A/T)TT(C/G)-3'. Cleavage occurs on the 3'-side of the TT dinucleotide at the point of strand exchange. HJ branch migration catalyzed by RuvA-RuvB allows RuvC to scan DNA until it finds its consensus sequence, where it cleaves and resolves the cruciform DNA. The polypeptide is Crossover junction endodeoxyribonuclease RuvC (Cupriavidus taiwanensis (strain DSM 17343 / BCRC 17206 / CCUG 44338 / CIP 107171 / LMG 19424 / R1) (Ralstonia taiwanensis (strain LMG 19424))).